The following is a 504-amino-acid chain: MTEAALVEGQVKLRDGKKWKSRWLVLRKPSPVADCLLMLVYKDKCERSKGLRERSSLTLEDICGLEPALPYEGLAHTLAIICLSQAVMLGFDSHEAMCAWDTRIRYALGEVHRFHVTVAPGTKLESGPATLHLCNDILVLARDIPPTVMGQWKLSDLRRYGAVPNGFIFEGGTRCGYWAGVFFLSSAEGEQMSFLFDCIVRGISPTKGPFGLRPVLPDPSSGGPSASEERVAQEALEALQLEKRLSLLSHSGRPGSGGDDRSLSSSSSEASHSDISASSRLTAWPEQSSSSAGTSQEGPGLVAAQGPGEAMLGASRPPLKPLRPRQLQEVGRQSSSDSGIATGSHSSYSGSFSSYAGSNLDVWRAGEEFGSLLSLPPGASAPEPRLCACPPGAAEYQVPTSLRHHYDTPRSLRQAPRDPSPASQGSSDHGSATDLGGQAPTGCPSSWLGARRRGQATEGPGSDAALPSPSPGESWEAGSPHAGPPPAFFLSCSICGGLKVKPPP.

Residues alanine 4–glycine 109 enclose the PH domain. The IRS-type PTB domain maps to arginine 105–phenylalanine 210. Disordered regions lie at residues phenylalanine 210 to alanine 232, leucine 248 to tyrosine 348, and serine 371 to glycine 483. Residues leucine 263–arginine 280 are compositionally biased toward low complexity. Composition is skewed to polar residues over residues proline 285–glutamate 297, glycine 331–alanine 341, and proline 421–glycine 430.

As to quaternary structure, homodimer. Forms a heterotetramer composed of 2 DOK7 and 2 MUSK molecules which facilitates MUSK trans-autophosphorylation on tyrosine residue and activation. Interacts (via IRS-type PTB domain) with MUSK (via cytoplasmic part); requires MUSK phosphorylation.

It is found in the cell membrane. The protein localises to the synapse. Functionally, probable muscle-intrinsic activator of MUSK that plays an essential role in neuromuscular synaptogenesis. Acts in aneural activation of MUSK and subsequent acetylcholine receptor (AchR) clustering in myotubes. Induces autophosphorylation of MUSK. The chain is Protein Dok-7 (Dok7) from Mus musculus (Mouse).